The primary structure comprises 555 residues: Natural resistance-associated macrophage protein 1 (555 aa).

The Cytoplasmic portion of the chain corresponds to 1–63 (MSGSGPAMAS…STPGFSFRKL (63 aa)). Residues 64 to 81 (WAFTGPGFLMSIAYLDPG) form a helical membrane-spanning segment. Over 82 to 90 (NVESDLQCG) the chain is Extracellular. Residues 91-110 (AVAGFKLLWVLLWATVLGLL) traverse the membrane as a helical segment. Residues 111–147 (CQRLAIRLGVVTGKDLAEICYLYYPRVPRVLLWLMME) lie on the Cytoplasmic side of the membrane. Residues 148–168 (IAIIGSDMQEVIGTAIAFSLL) form a helical membrane-spanning segment. Topologically, residues 169–172 (SAGR) are extracellular. Residues 173–192 (IPLWGGVLITITDTLFFLFL) traverse the membrane as a helical segment. At 193–201 (DKYGLRKLE) the chain is on the cytoplasmic side. The helical transmembrane segment at 202 to 222 (AFFGFLITIMALTFGYEYVMV) threads the bilayer. Residues 223–245 (RPAQTEVLKGIFLPYCPGCGREE) lie on the Extracellular side of the membrane. Residues 246-264 (LLQAVGIVGAIIMPHNIFL) traverse the membrane as a helical segment. At 265-292 (HSSLVKTRAIDRSKKEEVKEANMYFLTE) the chain is on the cytoplasmic side. Residues 293 to 312 (SCLALFVSFLINLFVMAVFG) form a helical membrane-spanning segment. Residues 313-354 (EAFYHQRNEDVHNKCVNSSVSRYASIFPINNETVSVDIYQGG) lie on the Extracellular side of the membrane. Residues Asn329 and Asn343 are each glycosylated (N-linked (GlcNAc...) asparagine). The chain crosses the membrane as a helical span at residues 355 to 374 (VILGCYFGAAALYIWAVGIL). Residues 375 to 405 (AAGQSSTMTGTYAGQFVMEGFLQLRWSRFTR) are Cytoplasmic-facing. Residues 406–423 (VLFTRSLAILPTLFVAAF) form a helical membrane-spanning segment. Residues 424–434 (RDVSQLTGMND) are Extracellular-facing. Residues 435-455 (LLNVLQSILLPFAVLPVLTFT) traverse the membrane as a helical segment. Over 456–471 (SLRPLMHDFANGLLGQ) the chain is Cytoplasmic. The chain crosses the membrane as a helical span at residues 472–493 (VLMSLITGLVCAINVYFVVDFL). Residues 494–501 (PTLRGLGY) are Extracellular-facing. Residues 502-521 (LIPLGLLLVAYVAFVTYLLW) traverse the membrane as a helical segment. The Cytoplasmic portion of the chain corresponds to 522–555 (TCSIAHGARFLARGRYNRFSFDVTADVPGLAGPH).

This sequence belongs to the NRAMP family. In terms of tissue distribution, macrophages; spleen and thymus and at lower level in liver and lung.

It localises to the late endosome membrane. The protein resides in the lysosome membrane. The enzyme catalyses Zn(2+)(in) + H(+)(out) = Zn(2+)(out) + H(+)(in). It catalyses the reaction Fe(2+)(in) + H(+)(out) = Fe(2+)(out) + H(+)(in). It carries out the reaction Mn(2+)(in) + H(+)(out) = Mn(2+)(out) + H(+)(in). Functionally, macrophage-specific antiporter that fluxes metal ions in either direction against a proton gradient. Localized to late endosomal lysosomal membranes, delivers bivalent cations from the cytosol into these acidic compartments where they may directly affect antimicrobial activity. Involved in iron metabolism and host natural resistance to infection with intracellular parasites. Pathogen resistance involves sequestration of Fe(2+) and Mn(2+), cofactors of both prokaryotic and eukaryotic catalases and superoxide dismutases, not only to protect the macrophage against its own generation of reactive oxygen species, but to deny the cations to the pathogen for synthesis of its protective enzymes. The protein is Natural resistance-associated macrophage protein 1 (SLC11A1) of Gallus gallus (Chicken).